Consider the following 558-residue polypeptide: uncharacterized protein (558 aa).

A disordered region spans residues 396–420 (SSITDNDTDNDSGATESQQTDSEND). Positions 407 to 416 (SGATESQQTD) are enriched in polar residues.

Belongs to the chlamydial CPn_0065/CT_288/TC_0561 family.

This is an uncharacterized protein from Chlamydia muridarum (strain MoPn / Nigg).